The following is an 800-amino-acid chain: Phosphate transporter PHO1 homolog 9 (800 aa).

The region spanning 1–346 (MKFGREFETQ…SRNASKPYLN (346 aa)) is the SPX domain. Over 1 to 398 (MKFGREFETQ…KTKREKHRIT (398 aa)) the chain is Cytoplasmic. Disordered stretches follow at residues 38–77 (QKQQ…PGLS), 91–119 (NRAS…HNHH), and 212–234 (PDLN…PAPS). Residues 42–51 (RPPPPPPPPS) show a composition bias toward pro residues. The span at 63–75 (GEGGGGGGGGGPG) shows a compositional bias: gly residues. Residues 95 to 119 (RSPKKSHKHHNPLSSKRHHHHHNHH) show a composition bias toward basic residues. Residues 216 to 229 (SVASAPSSPHSTMR) show a composition bias toward polar residues. Residues 399 to 419 (YFLGFFSGCAVALAIAITVLV) traverse the membrane as a helical segment. Residues 420-439 (HIRGLTKSEGRHQYMENIFP) are Extracellular-facing. The helical transmembrane segment at 440–460 (LYSLFGFVAVHLFMYAADIYF) threads the bilayer. Over 461-483 (WSRYRVNYPFIFGFEQGNDLGYR) the chain is Cytoplasmic. Residues 484-504 (EVLLVGSGLAVLTFGGVISNL) form a helical membrane-spanning segment. Residues 505 to 520 (DMEMDPRTKSFSVITE) lie on the Extracellular side of the membrane. A helical transmembrane segment spans residues 521 to 541 (LVPLALLVCLMMVLFCPFNII). Topologically, residues 542 to 670 (YRSSRYFFVG…IFEMKRGTYW (129 aa)) are cytoplasmic. The region spanning 606 to 800 (YDSEIYKELY…FQELGGSKSV (195 aa)) is the EXS domain. Residues 671–691 (LTVAVTTSSIATLFNTYWDIF) traverse the membrane as a helical segment. Over 692-718 (RDWGLMNRNSKNPWLRDKLLVPYKSIY) the chain is Extracellular. The chain crosses the membrane as a helical span at residues 719-739 (FIVMVANVVLRLAWMQTVLGI). Topologically, residues 740-800 (KEAPFLHKRA…FQELGGSKSV (61 aa)) are cytoplasmic.

The protein belongs to the SYG1 (TC 2.A.94) family. As to expression, specifically expressed in pollen grains.

The protein localises to the cell membrane. May transport inorganic phosphate (Pi). This chain is Phosphate transporter PHO1 homolog 9 (PHO1-H9), found in Arabidopsis thaliana (Mouse-ear cress).